A 103-amino-acid polypeptide reads, in one-letter code: Neuraminidase (103 aa).

Residues 1–18 (GIISLILQIGNIISIWVS) traverse the membrane as a helical; Signal-anchor for type II membrane protein segment. Over 19-103 (HSIQTGSQNH…KGDVFVIREP (85 aa)) the chain is Virion surface. N-linked (GlcNAc...) asparagine; by host glycans are attached at residues Asn-27, Asn-41, Asn-46, Asn-51, and Asn-71. Arg-101 serves as a coordination point for substrate.

Belongs to the glycosyl hydrolase 34 family. In terms of assembly, homotetramer. Requires Ca(2+) as cofactor. N-glycosylated.

Its subcellular location is the virion membrane. It is found in the host apical cell membrane. The enzyme catalyses Hydrolysis of alpha-(2-&gt;3)-, alpha-(2-&gt;6)-, alpha-(2-&gt;8)- glycosidic linkages of terminal sialic acid residues in oligosaccharides, glycoproteins, glycolipids, colominic acid and synthetic substrates.. Its activity is regulated as follows. Inhibited by the neuraminidase inhibitors zanamivir (Relenza) and oseltamivir (Tamiflu). These drugs interfere with the release of progeny virus from infected cells and are effective against all influenza strains. Resistance to neuraminidase inhibitors is quite rare. In terms of biological role, catalyzes the removal of terminal sialic acid residues from viral and cellular glycoconjugates. Cleaves off the terminal sialic acids on the glycosylated HA during virus budding to facilitate virus release. Additionally helps virus spread through the circulation by further removing sialic acids from the cell surface. These cleavages prevent self-aggregation and ensure the efficient spread of the progeny virus from cell to cell. Otherwise, infection would be limited to one round of replication. Described as a receptor-destroying enzyme because it cleaves a terminal sialic acid from the cellular receptors. May facilitate viral invasion of the upper airways by cleaving the sialic acid moieties on the mucin of the airway epithelial cells. Likely to plays a role in the budding process through its association with lipid rafts during intracellular transport. May additionally display a raft-association independent effect on budding. Plays a role in the determination of host range restriction on replication and virulence. Sialidase activity in late endosome/lysosome traffic seems to enhance virus replication. The polypeptide is Neuraminidase (NA) (Influenza A virus (strain A/Camel/Mongolia/1982 H1N1)).